A 310-amino-acid chain; its full sequence is tRNA dimethylallyltransferase (310 aa).

An ATP-binding site is contributed by 9-16 (GPTAVGKT). 11 to 16 (TAVGKT) serves as a coordination point for substrate. The segment at 34–37 (DSMQ) is interaction with substrate tRNA.

Belongs to the IPP transferase family. In terms of assembly, monomer. It depends on Mg(2+) as a cofactor.

It catalyses the reaction adenosine(37) in tRNA + dimethylallyl diphosphate = N(6)-dimethylallyladenosine(37) in tRNA + diphosphate. In terms of biological role, catalyzes the transfer of a dimethylallyl group onto the adenine at position 37 in tRNAs that read codons beginning with uridine, leading to the formation of N6-(dimethylallyl)adenosine (i(6)A). The chain is tRNA dimethylallyltransferase from Pediococcus pentosaceus (strain ATCC 25745 / CCUG 21536 / LMG 10740 / 183-1w).